Reading from the N-terminus, the 513-residue chain is Na(+)/H(+) antiporter NhaB (513 aa).

12 helical membrane-spanning segments follow: residues 23 to 43 (LALI…PFVA), 52 to 72 (IFTL…LLAI), 97 to 117 (LLLM…LFIF), 120 to 140 (LLLS…AAAF), 144 to 164 (FLDA…FYGI), 202 to 222 (LMMH…VGEP), 238 to 258 (FFLR…LTCL), 303 to 323 (AIIG…VGLI), 348 to 368 (TESL…AVII), 391 to 411 (LFYI…VGTI), 447 to 467 (ATPN…APLI), and 475 to 495 (VWMA…CVEF).

Belongs to the NhaB Na(+)/H(+) (TC 2.A.34) antiporter family.

Its subcellular location is the cell inner membrane. The catalysed reaction is 2 Na(+)(in) + 3 H(+)(out) = 2 Na(+)(out) + 3 H(+)(in). In terms of biological role, na(+)/H(+) antiporter that extrudes sodium in exchange for external protons. The polypeptide is Na(+)/H(+) antiporter NhaB (Escherichia coli O45:K1 (strain S88 / ExPEC)).